A 112-amino-acid chain; its full sequence is Urease subunit beta (112 aa).

Belongs to the urease beta subunit family. In terms of assembly, heterotrimer of UreA (gamma), UreB (beta) and UreC (alpha) subunits. Three heterotrimers associate to form the active enzyme.

The protein localises to the cytoplasm. It carries out the reaction urea + 2 H2O + H(+) = hydrogencarbonate + 2 NH4(+). Its pathway is nitrogen metabolism; urea degradation; CO(2) and NH(3) from urea (urease route): step 1/1. This is Urease subunit beta from Thioalkalivibrio sulfidiphilus (strain HL-EbGR7).